We begin with the raw amino-acid sequence, 278 residues long: Toxin coregulated pilus biosynthesis protein D (278 aa).

Residues 30 to 50 (LLVAIIFLVLSILGGGAYLYY) form a helical membrane-spanning segment.

The protein localises to the cell membrane. Its function is as follows. Involved in TCP pilus biogenesis. This Vibrio cholerae serotype O1 (strain ATCC 39315 / El Tor Inaba N16961) protein is Toxin coregulated pilus biosynthesis protein D (tcpD).